Consider the following 261-residue polypeptide: 3-methyl-2-oxobutanoate hydroxymethyltransferase (261 aa).

Mg(2+) is bound by residues Asp47 and Asp86. 3-methyl-2-oxobutanoate-binding positions include 47 to 48 (DS), Asp86, and Lys116. Position 118 (Glu118) interacts with Mg(2+). Glu186 functions as the Proton acceptor in the catalytic mechanism.

It belongs to the PanB family. Homodecamer; pentamer of dimers. It depends on Mg(2+) as a cofactor.

It localises to the cytoplasm. It carries out the reaction 3-methyl-2-oxobutanoate + (6R)-5,10-methylene-5,6,7,8-tetrahydrofolate + H2O = 2-dehydropantoate + (6S)-5,6,7,8-tetrahydrofolate. The protein operates within cofactor biosynthesis; (R)-pantothenate biosynthesis; (R)-pantoate from 3-methyl-2-oxobutanoate: step 1/2. Catalyzes the reversible reaction in which hydroxymethyl group from 5,10-methylenetetrahydrofolate is transferred onto alpha-ketoisovalerate to form ketopantoate. In Thermosynechococcus vestitus (strain NIES-2133 / IAM M-273 / BP-1), this protein is 3-methyl-2-oxobutanoate hydroxymethyltransferase.